Here is a 249-residue protein sequence, read N- to C-terminus: Hydroxyacylglutathione hydrolase (249 aa).

His54, His56, Asp58, His59, His113, Asp138, and His176 together coordinate Zn(2+).

It belongs to the metallo-beta-lactamase superfamily. Glyoxalase II family. In terms of assembly, monomer. Zn(2+) serves as cofactor.

It catalyses the reaction an S-(2-hydroxyacyl)glutathione + H2O = a 2-hydroxy carboxylate + glutathione + H(+). It participates in secondary metabolite metabolism; methylglyoxal degradation; (R)-lactate from methylglyoxal: step 2/2. Thiolesterase that catalyzes the hydrolysis of S-D-lactoyl-glutathione to form glutathione and D-lactic acid. In Parasynechococcus marenigrum (strain WH8102), this protein is Hydroxyacylglutathione hydrolase.